A 142-amino-acid chain; its full sequence is Large ribosomal subunit protein uL13 (142 aa).

The protein belongs to the universal ribosomal protein uL13 family. As to quaternary structure, part of the 50S ribosomal subunit.

This protein is one of the early assembly proteins of the 50S ribosomal subunit, although it is not seen to bind rRNA by itself. It is important during the early stages of 50S assembly. This chain is Large ribosomal subunit protein uL13, found in Pseudoalteromonas translucida (strain TAC 125).